We begin with the raw amino-acid sequence, 89 residues long: Exodeoxyribonuclease 7 small subunit (89 aa).

The tract at residues 1-23 (MRPWRCVSMAKAPAAPSSTQPDP) is disordered.

It belongs to the XseB family. In terms of assembly, heterooligomer composed of large and small subunits.

The protein localises to the cytoplasm. The enzyme catalyses Exonucleolytic cleavage in either 5'- to 3'- or 3'- to 5'-direction to yield nucleoside 5'-phosphates.. Its function is as follows. Bidirectionally degrades single-stranded DNA into large acid-insoluble oligonucleotides, which are then degraded further into small acid-soluble oligonucleotides. This is Exodeoxyribonuclease 7 small subunit from Acidovorax sp. (strain JS42).